The chain runs to 615 residues: TANK-binding kinase 1-binding protein 1 (615 aa).

The interval 1 to 279 (MESMFEDDIS…QDLASNQSER (279 aa)) is homodimerization. A coiled-coil region spans residues 48–162 (YGDIKERLGG…ALVETHLRQI (115 aa)). Residue serine 184 is modified to Phosphoserine. Residues 221-276 (VSDLERRRLEEALEAAQGEARGAQLREEQLQAECERLQGELKQLQETRAQDLASNQ) adopt a coiled-coil conformation. The tract at residues 280–329 (DMAWVKRVGDDQVNLALAYTELTEELGRLRELSSLQGRILRTLLQEQARS) is interaction with TBK1 and IKBKE. Residues 326 to 458 (QARSGGQRHS…SHHVKAGFQG (133 aa)) are disordered. Pro residues predominate over residues 345 to 365 (PQCPSPSPPARAAPPCPPCQS). A phosphoserine mark is found at serine 365, serine 372, serine 379, serine 385, serine 400, and serine 415. The span at 389–406 (PSCPSPVPQRRSPVPPSC) shows a compositional bias: pro residues. The segment covering 416 to 435 (PVPPSCPAPQPRPPPPPPPG) has biased composition (pro residues). A phosphoserine mark is found at serine 504 and serine 534. Residues 583–609 (IRSCPLCQLGFPVGYPDDALIKHIDSH) form a UBZ1-type zinc finger. Positions 586, 589, 605, and 609 each coordinate Zn(2+).

Homodimer. May form a heterodimer with NAP1. Interacts with TKB1 and IKBKE. Weakly interacts with DDX3X. As to quaternary structure, (Microbial infection) Interacts with vaccinia virus protein C6. In terms of tissue distribution, detected in leukocytes, lung, placenta, small intestine, liver, kidney, spleen, muscle, heart, brain and at low levels in thymus.

Functionally, adapter protein which constitutively binds TBK1 and IKBKE playing a role in antiviral innate immunity. This is TANK-binding kinase 1-binding protein 1 from Homo sapiens (Human).